Consider the following 402-residue polypeptide: Multidrug resistance protein MdtH (402 aa).

Topologically, residues 1 to 12 (MSRVSQARNLGK) are cytoplasmic. Residues 13–33 (YFLLIDNMLVVLGFFVVFPLI) form a helical membrane-spanning segment. Residues 34 to 98 (SIRFVDQMGW…GFATMGIAHE (65 aa)) lie on the Periplasmic side of the membrane. The chain crosses the membrane as a helical span at residues 99 to 116 (PWLLWFSCLLSGLGGTLF). The Cytoplasmic portion of the chain corresponds to 117–138 (DPPRSALVVKLIRPQQRCRFFS). The chain crosses the membrane as a helical span at residues 139–159 (LLMMQDSAGAVIGALLGSWLL). Over 160–164 (QYDFR) the chain is Periplasmic. The helical transmembrane segment at 165 to 185 (LVCATGAVLFVLCAAFNAWLL) threads the bilayer. The Cytoplasmic segment spans residues 186–213 (PAWKLSTVRTPVREGMTRVMRDKRFVTY). A helical transmembrane segment spans residues 214–234 (VLTLAGYYMLAVQVMLMLPIM). Residues 235 to 243 (VNDVAGAPS) lie on the Periplasmic side of the membrane. The helical transmembrane segment at 244–264 (AVKWMYAIEACLSLTLLYPIA) threads the bilayer. Topologically, residues 265 to 276 (RWSEKHFRLEHR) are cytoplasmic. Residues 277–297 (LMAGLLIMSLSMMPVGMVSGL) traverse the membrane as a helical segment. The Periplasmic portion of the chain corresponds to 298–299 (QQ). The chain crosses the membrane as a helical span at residues 300 to 320 (LFTLICLFYIGSIIAEPARET). Over 321–339 (LSALLADARARGSYMGFSR) the chain is Cytoplasmic. Residues 340–360 (LGLAIGGAIGYIGGGWLFDLG) traverse the membrane as a helical segment. Over 361–367 (KSAHQPE) the chain is Periplasmic. A helical transmembrane segment spans residues 368-388 (LPWMMLGIIGIFTFLALGWQF). Topologically, residues 389-402 (SQKRATRRLLERDA) are cytoplasmic.

The protein belongs to the major facilitator superfamily. DHA1 family. MdtH (TC 2.A.1.2.21) subfamily.

Its subcellular location is the cell inner membrane. The polypeptide is Multidrug resistance protein MdtH (Shigella sonnei (strain Ss046)).